Here is a 601-residue protein sequence, read N- to C-terminus: Glutamine--fructose-6-phosphate aminotransferase [isomerizing] (601 aa).

The active-site Nucleophile; for GATase activity is the C2. A Glutamine amidotransferase type-2 domain is found at 2–218 (CGIVGYIGYD…DHEIVIVKRD (217 aa)). SIS domains lie at 284–423 (IIND…NHGR) and 453–591 (IATD…VDKP). The active-site For Fru-6P isomerization activity is the K596.

In terms of assembly, homodimer.

The protein localises to the cytoplasm. The catalysed reaction is D-fructose 6-phosphate + L-glutamine = D-glucosamine 6-phosphate + L-glutamate. Catalyzes the first step in hexosamine metabolism, converting fructose-6P into glucosamine-6P using glutamine as a nitrogen source. The chain is Glutamine--fructose-6-phosphate aminotransferase [isomerizing] from Staphylococcus epidermidis (strain ATCC 35984 / DSM 28319 / BCRC 17069 / CCUG 31568 / BM 3577 / RP62A).